Here is a 416-residue protein sequence, read N- to C-terminus: UDP-N-acetylglucosamine 1-carboxyvinyltransferase (416 aa).

22-23 (KN) is a phosphoenolpyruvate binding site. Residue R91 participates in UDP-N-acetyl-alpha-D-glucosamine binding. The active-site Proton donor is C115. C115 carries the 2-(S-cysteinyl)pyruvic acid O-phosphothioketal modification. UDP-N-acetyl-alpha-D-glucosamine is bound by residues 120–124 (RPIDL), D305, and I327.

Belongs to the EPSP synthase family. MurA subfamily.

Its subcellular location is the cytoplasm. The enzyme catalyses phosphoenolpyruvate + UDP-N-acetyl-alpha-D-glucosamine = UDP-N-acetyl-3-O-(1-carboxyvinyl)-alpha-D-glucosamine + phosphate. Its pathway is cell wall biogenesis; peptidoglycan biosynthesis. In terms of biological role, cell wall formation. Adds enolpyruvyl to UDP-N-acetylglucosamine. The chain is UDP-N-acetylglucosamine 1-carboxyvinyltransferase from Buchnera aphidicola subsp. Acyrthosiphon pisum (strain Tuc7).